The primary structure comprises 207 residues: Probable nicotinate-nucleotide adenylyltransferase (207 aa).

Belongs to the NadD family.

The enzyme catalyses nicotinate beta-D-ribonucleotide + ATP + H(+) = deamido-NAD(+) + diphosphate. Its pathway is cofactor biosynthesis; NAD(+) biosynthesis; deamido-NAD(+) from nicotinate D-ribonucleotide: step 1/1. In terms of biological role, catalyzes the reversible adenylation of nicotinate mononucleotide (NaMN) to nicotinic acid adenine dinucleotide (NaAD). The chain is Probable nicotinate-nucleotide adenylyltransferase from Desulfitobacterium hafniense (strain DSM 10664 / DCB-2).